Reading from the N-terminus, the 1204-residue chain is ATP-dependent helicase/nuclease subunit A (1204 aa).

Positions 2–469 (TKFTKEQNQA…IVLSDNFRST (468 aa)) constitute a UvrD-like helicase ATP-binding domain. 23-30 (ASAGSGKT) lines the ATP pocket. The 289-residue stretch at 496 to 784 (EGQLQFGATY…KLMTIHASKG (289 aa)) folds into the UvrD-like helicase C-terminal domain.

The protein belongs to the helicase family. AddA subfamily. In terms of assembly, heterodimer of AddA and AddB/RexB. Requires Mg(2+) as cofactor.

It carries out the reaction Couples ATP hydrolysis with the unwinding of duplex DNA by translocating in the 3'-5' direction.. The catalysed reaction is ATP + H2O = ADP + phosphate + H(+). In terms of biological role, the heterodimer acts as both an ATP-dependent DNA helicase and an ATP-dependent, dual-direction single-stranded exonuclease. Recognizes the chi site generating a DNA molecule suitable for the initiation of homologous recombination. The AddA nuclease domain is required for chi fragment generation; this subunit has the helicase and 3' -&gt; 5' nuclease activities. The polypeptide is ATP-dependent helicase/nuclease subunit A (Lactobacillus johnsonii (strain CNCM I-12250 / La1 / NCC 533)).